A 108-amino-acid polypeptide reads, in one-letter code: MSFSRRPKITKSDIVDQISLNIRNNNLKLEKKYIRLVIDAFFEELKGNLCLNNVIEFRSFGTFEVRKRKGRLNARNPQTGEYVKVLDHHVAYFRPGKDLKERVWGIKG.

This sequence belongs to the bacterial histone-like protein family.

Histone-like DNA-binding protein which is capable of wrapping DNA to stabilize it, and thus to prevent its denaturation under extreme environmental conditions. The polypeptide is DNA-binding protein HBbu (hbb) (Borrelia garinii subsp. bavariensis (strain ATCC BAA-2496 / DSM 23469 / PBi) (Borreliella bavariensis)).